The sequence spans 389 residues: Phosphoglycerate kinase (389 aa).

Substrate-binding positions include aspartate 21–asparagine 23, arginine 36, histidine 59–arginine 62, arginine 112, and arginine 145. ATP is bound by residues lysine 196, glutamate 313, and glycine 342–threonine 345.

Belongs to the phosphoglycerate kinase family. Monomer.

It is found in the cytoplasm. The enzyme catalyses (2R)-3-phosphoglycerate + ATP = (2R)-3-phospho-glyceroyl phosphate + ADP. It participates in carbohydrate degradation; glycolysis; pyruvate from D-glyceraldehyde 3-phosphate: step 2/5. In Histophilus somni (strain 2336) (Haemophilus somnus), this protein is Phosphoglycerate kinase.